The primary structure comprises 616 residues: Chaperone protein HscA (616 aa).

The protein belongs to the heat shock protein 70 family.

Functionally, chaperone involved in the maturation of iron-sulfur cluster-containing proteins. Has a low intrinsic ATPase activity which is markedly stimulated by HscB. Involved in the maturation of IscU. This Salmonella paratyphi A (strain ATCC 9150 / SARB42) protein is Chaperone protein HscA.